The following is a 145-amino-acid chain: MYPAHLLLLLAVCVSLLGASAIPPLPLNLIQFTYLIECANKGRRTSFNYADYGCYCGIGGSGTPVDKLDRCCKTHDECYAQAEKKGCYPKLTMYNYYCGGGGPYCNSKTECQRFVCDCDVRAADCFARYPYNNKNYNINTSNRCK.

The first 21 residues, 1 to 21, serve as a signal peptide directing secretion; the sequence is MYPAHLLLLLAVCVSLLGASA. The propeptide occupies 22-27; sequence IPPLPL. 7 disulfides stabilise this stretch: Cys38-Cys98, Cys54-Cys144, Cys56-Cys72, Cys71-Cys125, Cys78-Cys118, Cys87-Cys111, and Cys105-Cys116. 3 residues coordinate Ca(2+): Tyr55, Gly57, and Gly59. His75 is an active-site residue. Asp76 is a binding site for Ca(2+). Asp119 is an active-site residue.

It belongs to the phospholipase A2 family. Group I subfamily. D49 sub-subfamily. It depends on Ca(2+) as a cofactor.

The protein resides in the secreted. It carries out the reaction a 1,2-diacyl-sn-glycero-3-phosphocholine + H2O = a 1-acyl-sn-glycero-3-phosphocholine + a fatty acid + H(+). Functionally, PLA2 catalyzes the calcium-dependent hydrolysis of the 2-acyl groups in 3-sn-phosphoglycerides. This is Basic phospholipase A2 PC16 from Laticauda laticaudata (Blue-ringed sea krait).